Consider the following 611-residue polypeptide: Chaperone protein DnaK (611 aa).

T172 is modified (phosphothreonine; by autocatalysis). The segment at 575–611 is disordered; that stretch reads AAQAAQAQQDGGNESADKQDDNVVDADYEEVNDDDKK. Positions 596 to 611 are enriched in acidic residues; the sequence is NVVDADYEEVNDDDKK.

This sequence belongs to the heat shock protein 70 family.

Acts as a chaperone. The polypeptide is Chaperone protein DnaK (Shouchella clausii (strain KSM-K16) (Alkalihalobacillus clausii)).